Consider the following 492-residue polypeptide: UPF0236 protein TTE0402 (492 aa).

Belongs to the UPF0236 family.

This Caldanaerobacter subterraneus subsp. tengcongensis (strain DSM 15242 / JCM 11007 / NBRC 100824 / MB4) (Thermoanaerobacter tengcongensis) protein is UPF0236 protein TTE0402.